Reading from the N-terminus, the 340-residue chain is Deubiquitinase SseL (340 aa).

His223 is an active-site residue. The Nucleophile role is filled by Cys285.

It belongs to the peptidase C79 family.

The protein resides in the secreted. It localises to the host cytoplasm. In terms of biological role, effector proteins function to alter host cell physiology and promote bacterial survival in host tissues. This protease targets the host cell ubiquitin pathway by acting as a deubiquitinase in infected host cells. Specifically hydrolyzes mono- and polyubiquitin substrates in vitro with a preference for 'Lys-63'-linked ubiquitin chains, suggesting that it interferes with a signaling pathway rather than inhibiting proteasomal-dependent degradation of its targets. Does not possess desumoylating activity. Is required for the Salmonella-induced delayed cytotoxicity in macrophages and full virulence. Is not required for intracellular bacterial replication. This chain is Deubiquitinase SseL (sseL), found in Salmonella typhimurium (strain LT2 / SGSC1412 / ATCC 700720).